A 103-amino-acid chain; its full sequence is Small ribosomal subunit protein uS10 (103 aa).

Belongs to the universal ribosomal protein uS10 family. In terms of assembly, part of the 30S ribosomal subunit.

Its function is as follows. Involved in the binding of tRNA to the ribosomes. The chain is Small ribosomal subunit protein uS10 from Xylella fastidiosa (strain 9a5c).